The following is a 1205-amino-acid chain: Caskin-2 (1205 aa).

6 ANK repeats span residues 48 to 77 (DGFS…SVDI), 81 to 110 (NGMR…SVNA), 114 to 143 (DGQI…NPCH), 147 to 176 (GKKT…CVSL), 188 to 217 (NFTT…EINK), and 220 to 249 (KMGT…DVNI). The SH3 domain occupies 281 to 347 (SGILKVRALK…PPSIVEVISK (67 aa)). Composition is skewed to polar residues over residues 377-388 (SPGSQLGINPDT) and 398-411 (GSES…SGQS). Residues 377 to 411 (SPGSQLGINPDTSVAGDRHSVGSESSVRSAGSGQS) form a disordered region. SAM domains follow at residues 468 to 531 (KDAE…LIVA) and 537 to 601 (QIPV…LLDL). Over residues 666-687 (RRSFSQESISSRSQGSGHSQES) the composition is skewed to low complexity. 4 disordered regions span residues 666 to 689 (RRSF…ESAS), 784 to 964 (RPGR…QRHL), 984 to 1054 (QIAA…SQEP), and 1132 to 1155 (SEAS…KGPP). Positions 823–840 (SSMSSAEGQSPEGQSSVK) are enriched in polar residues. The segment covering 908-919 (ISSQHSSSESIP) has biased composition (low complexity). Positions 942-959 (DATSELSPTQESQLQSAE) are enriched in polar residues. Over residues 1009–1037 (KNEEHDFNLTESDTVKRRPKVKEKEEESP) the composition is skewed to basic and acidic residues. Composition is skewed to polar residues over residues 1042 to 1054 (ANNS…SQEP) and 1137 to 1155 (REQT…KGPP).

The polypeptide is Caskin-2 (caskin2) (Xenopus laevis (African clawed frog)).